The following is a 144-amino-acid chain: Ribonuclease H (144 aa).

Positions 1 to 141 (MKKVEIFTDG…ADRLASEAAD (141 aa)) constitute an RNase H type-1 domain. D9, E47, D69, and D133 together coordinate Mg(2+).

It belongs to the RNase H family. As to quaternary structure, monomer. The cofactor is Mg(2+).

The protein resides in the cytoplasm. It carries out the reaction Endonucleolytic cleavage to 5'-phosphomonoester.. Functionally, endonuclease that specifically degrades the RNA of RNA-DNA hybrids. In Erythrobacter litoralis (strain HTCC2594), this protein is Ribonuclease H.